The sequence spans 257 residues: uncharacterized protein (257 aa).

Phosphoserine is present on Ser-127. Disordered stretches follow at residues 146 to 174 (HEDP…EDDG) and 210 to 231 (AREK…RREK). Positions 151–160 (PSSTYNSSIS) are enriched in polar residues. A coiled-coil region spans residues 196 to 257 (HVRMVREVHE…QQQQEDEQKT (62 aa)).

This is an uncharacterized protein from Arabidopsis thaliana (Mouse-ear cress).